Here is a 453-residue protein sequence, read N- to C-terminus: MEKENITIDPRSSFTPSSSADIPVPPDGLVQRSTRIKRIQTTAMLLLFFAAVINYLDRSSLSVANLTIREELGLSATEIGALLSVFSLAYGIAQLPCGPLLDRKGPRLMLGLGMFFWSLFQAMSGMVHNFTQFVLVRIGMGIGEAPMNPCGVKVINDWFNIKERGRPMGFFNAASTIGVAVSPPILAAMMLVMGWRGMFITIGVLGIFLAIGWYMLYRNREHVELTAVEQAYLNAGSVNARRDPLSFAEWRSLFRNRTMWGMMLGFSGINYTAWLYLAWLPGYLQTAYNLDLKSTGLMAAIPFLFGAAGMLVNGYVTDWLVKGGMAPIKSRKICIIAGMFCSAAFTLIVPQATTSMTAVLLIGMALFCIHFAGTSCWGLIHVAVASRMTASVGSIQNFASFICASFAPIITGFIVDTTHSFRLALIICGCVTAAGALAYIFLVRQPINDPRKD.

Positions Met1–Pro23 are disordered. Over Met1 to Thr42 the chain is Periplasmic. Polar residues predominate over residues Pro10–Ala20. A helical transmembrane segment spans residues Ala43–Val63. Topologically, residues Ala64–Glu71 are cytoplasmic. The helical transmembrane segment at Leu72 to Ile92 threads the bilayer. Over Ala93–Arg107 the chain is Periplasmic. A helical transmembrane segment spans residues Leu108–His128. At Asn129–Ala174 the chain is on the cytoplasmic side. A helical membrane pass occupies residues Ser175–Trp195. Position 196 (Arg196) is a topological domain, periplasmic. The helical transmembrane segment at Gly197 to Tyr217 threads the bilayer. Over Arg218–Met259 the chain is Cytoplasmic. Residues Trp260–Leu280 traverse the membrane as a helical segment. Topologically, residues Pro281–Thr295 are periplasmic. A helical transmembrane segment spans residues Gly296–Val316. Residues Thr317–Lys332 lie on the Cytoplasmic side of the membrane. The chain crosses the membrane as a helical span at residues Ile333–Thr353. Topologically, residues Thr354–Val359 are periplasmic. Residues Leu360–Ile380 traverse the membrane as a helical segment. At His381–Ser394 the chain is on the cytoplasmic side. The helical transmembrane segment at Ile395 to Val415 threads the bilayer. The Periplasmic segment spans residues Asp416–Arg422. A helical membrane pass occupies residues Leu423–Val443. The Cytoplasmic portion of the chain corresponds to Arg444–Asp453.

The protein belongs to the major facilitator superfamily. Phthalate permease family.

Its subcellular location is the cell inner membrane. It carries out the reaction L-galactonate(in) + H(+)(in) = L-galactonate(out) + H(+)(out). In terms of biological role, probably responsible for the transport of L-galactonate from the periplasm across the inner membrane. Is essential for growth on L-galactonate as the sole carbon source. The chain is Probable L-galactonate transporter (lgoT) from Escherichia coli (strain K12).